The sequence spans 1254 residues: Juxtamembrane domain-associated catenin (1254 aa).

Disordered stretches follow at residues 1-38, 84-106, and 145-209; these read MISSGWMQEMEPIPEEGTEADGSEWGAMSDTAKRTMRK, AGPTSARGSSYSYSYESHYDNPP, and PYSN…SAPG. Over residues 12 to 22 the composition is skewed to acidic residues; it reads PIPEEGTEADG. Residues 145 to 157 are compositionally biased toward polar residues; sequence PYSNIDFDSSGLP. Fibronectin type-III domains follow at residues 207–302, 315–411, 428–518, and 530–624; these read APGV…IPIS, APGR…IRPA, PPGQ…LRPT, and ILEA…IEPS. Residues 412-433 form a disordered region; that stretch reads APQRHVPARKVSESVQPPGQPQ. Residues 662–685 are disordered; it reads MVRESPPLPERDDSPPPLRRANNN. ARM repeat units lie at residues 733 to 775, 777 to 820, 874 to 922, 969 to 1012, and 1016 to 1058; these read GGIP…AVME, DGVR…ESAT, NLIE…YDPA, HVVK…RAAV, and KGLP…KYAL. The disordered stretch occupies residues 920–960; it reads DPAAAHSSSSKNMKHVASPKPEKKKKDKEKKKDKNPKNIVT. The interval 1159–1254 is disordered; the sequence is GTARRGDSST…GGGNIDDSWV (96 aa). The span at 1166 to 1176 shows a compositional bias: polar residues; it reads SSTLARPISSQ. The span at 1177–1187 shows a compositional bias: basic and acidic residues; the sequence is GRERPSMHQLD.

Belongs to the beta-catenin family. In terms of assembly, associated with the catenin-cadherin complex consisting of hmr-1, hmp-1 and hmp-2. Interacts with hmr-1. Interacts with picc-1. Epidermal cells.

It localises to the cell junction. The protein localises to the adherens junction. The protein resides in the nucleus. May act as a positive modulator of hmr-1 function during epidermal morphogenesis. Required for proper localization of other junctional components, such as pac-1. This is Juxtamembrane domain-associated catenin (jac-1) from Caenorhabditis elegans.